The primary structure comprises 163 residues: NADH-quinone oxidoreductase subunit I (163 aa).

4Fe-4S ferredoxin-type domains lie at 54-84 and 94-123; these read LRRY…IDAE and TRYD…EGPN. Cysteine 64, cysteine 67, cysteine 70, cysteine 74, cysteine 103, cysteine 106, cysteine 109, and cysteine 113 together coordinate [4Fe-4S] cluster.

This sequence belongs to the complex I 23 kDa subunit family. In terms of assembly, NDH-1 is composed of at least 14 different subunits, Nqo1 to Nqo14. The complex has a L-shaped structure, with the hydrophobic arm (subunits Nqo7, Nqo8, Nqo10 to Nqo14) embedded in the inner membrane and the hydrophilic peripheral arm (subunits Nqo1 to Nqo6, Nqo9) protruding into the bacterial cytoplasm. The hydrophilic domain contains all the redox centers. NADH-quinone oxidoreductase forms a supercomplex with ubiquinol-cytochrome c reductase complex (complex III or cytochrome b-c1 complex) and cytochrome c oxidase (complex IV), which stabilizes the NADH-quinone oxidoreductase complex. [4Fe-4S] cluster is required as a cofactor.

The protein localises to the cell inner membrane. The catalysed reaction is a quinone + NADH + 5 H(+)(in) = a quinol + NAD(+) + 4 H(+)(out). NDH-1 shuttles electrons from NADH, via FMN and iron-sulfur (Fe-S) centers, to quinones in the respiratory chain. The immediate electron acceptor for the enzyme in this species is believed to be ubiquinone. Couples the redox reaction to proton translocation (for every two electrons transferred, four hydrogen ions are translocated across the cytoplasmic membrane), and thus conserves the redox energy in a proton gradient. The sequence is that of NADH-quinone oxidoreductase subunit I from Paracoccus denitrificans (strain Pd 1222).